The following is a 341-amino-acid chain: Serpentine receptor class epsilon-12 (341 aa).

The next 7 helical transmembrane spans lie at 30–50 (TAFY…LFSA), 57–77 (FTLV…AIIV), 101–121 (AMTF…FSIL), 140–160 (YISY…AILL), 167–187 (IFVV…NQFL), 230–250 (LNFI…SVLF), and 262–282 (ICSL…PQIM).

The protein belongs to the nematode receptor-like protein sre family.

Its subcellular location is the membrane. The chain is Serpentine receptor class epsilon-12 (sre-12) from Caenorhabditis elegans.